The following is a 436-amino-acid chain: Nucleolar protein 4-like (436 aa).

A disordered region spans residues 1 to 184 (MSDSTWMSAD…KMNDSEGMDP (184 aa)). Over residues 41-61 (SESGSGNGSSTLNPSTSSSTQ) the composition is skewed to low complexity. Residue Ser-130 is modified to Phosphoserine. A compositionally biased stretch (acidic residues) spans 160-169 (ADDDDDDHDD). Residues 170–184 (HEDNDKMNDSEGMDP) are compositionally biased toward basic and acidic residues. Residue Ser-295 is modified to Phosphoserine. Positions 351–366 (QPPASLQTGNHSNGPT) are enriched in polar residues. The tract at residues 351 to 400 (QPPASLQTGNHSNGPTDLSMKGGASTTSTTPTPTPSSTSTSRPVPTAQLS) is disordered. Positions 375–396 (STTSTTPTPTPSSTSTSRPVPT) are enriched in low complexity.

The polypeptide is Nucleolar protein 4-like (NOL4L) (Pongo abelii (Sumatran orangutan)).